Here is a 246-residue protein sequence, read N- to C-terminus: 2-aminoethylphosphonate cytidylyltransferase (246 aa).

CMP-(2-aminoethyl)phosphonate-binding residues include Ala19, Gly20, Lys34, Ser97, Glu114, and Ala115. Mg(2+) contacts are provided by Asp116 and Asp145. The CMP-(2-aminoethyl)phosphonate site is built by Asp145, Lys161, and Asp202. Mg(2+) is bound by residues Glu226 and Asp228.

Belongs to the LicC/PntC cytidylyltransferase family. As to quaternary structure, monomer. Mg(2+) is required as a cofactor.

It carries out the reaction (2-aminoethyl)phosphonate + CTP = CMP-(2-aminoethyl)phosphonate + diphosphate. Its pathway is phosphorus metabolism; phosphonate biosynthesis. Functionally, cytidylyltransferase involved in the biosynthesis of cell-surface phosphonates. Catalyzes the activation of 2-aminoethylphosphonate (AEP) to CMP-2-aminoethylphosphonate (CMP-AEP). Can also use phosphocholine, with much lower efficiency. Exhibits strong activity towards CTP, limited activity towards ATP and no activity with GTP. The sequence is that of 2-aminoethylphosphonate cytidylyltransferase from Lancefieldella rimae (strain ATCC 49626 / DSM 7090 / CCUG 31168 / NBRC 15546 / VPI D140H-11A) (Atopobium rimae).